We begin with the raw amino-acid sequence, 309 residues long: Probable manganese-dependent inorganic pyrophosphatase (309 aa).

Residues His9, Asp13, Asp15, Asp75, His97, and Asp149 each contribute to the Mn(2+) site.

It belongs to the PPase class C family. Mn(2+) serves as cofactor.

The protein resides in the cytoplasm. The enzyme catalyses diphosphate + H2O = 2 phosphate + H(+). The sequence is that of Probable manganese-dependent inorganic pyrophosphatase from Bacillus cereus (strain ATCC 10987 / NRS 248).